Consider the following 144-residue polypeptide: uncharacterized protein (144 aa).

Residues 124 to 133 (KALNRKKSKT) show a composition bias toward basic residues. Residues 124–144 (KALNRKKSKTKNGEKNGEGKS) form a disordered region. Residues 134–144 (KNGEKNGEGKS) are compositionally biased toward basic and acidic residues.

This is an uncharacterized protein from Acidianus filamentous virus 1 (isolate United States/Yellowstone) (AFV-1).